A 365-amino-acid polypeptide reads, in one-letter code: Succinyl-diaminopimelate desuccinylase (365 aa).

Zn(2+) is bound at residue His64. Asp66 is an active-site residue. Residue Asp95 participates in Zn(2+) binding. Glu125 (proton acceptor) is an active-site residue. Zn(2+) is bound by residues Glu126, Glu154, and His339.

Belongs to the peptidase M20A family. DapE subfamily. As to quaternary structure, homodimer. It depends on Zn(2+) as a cofactor. Co(2+) is required as a cofactor.

It catalyses the reaction N-succinyl-(2S,6S)-2,6-diaminopimelate + H2O = (2S,6S)-2,6-diaminopimelate + succinate. It functions in the pathway amino-acid biosynthesis; L-lysine biosynthesis via DAP pathway; LL-2,6-diaminopimelate from (S)-tetrahydrodipicolinate (succinylase route): step 3/3. Functionally, catalyzes the hydrolysis of N-succinyl-L,L-diaminopimelic acid (SDAP), forming succinate and LL-2,6-diaminopimelate (DAP), an intermediate involved in the bacterial biosynthesis of lysine and meso-diaminopimelic acid, an essential component of bacterial cell walls. The sequence is that of Succinyl-diaminopimelate desuccinylase from Sulfurimonas denitrificans (strain ATCC 33889 / DSM 1251) (Thiomicrospira denitrificans (strain ATCC 33889 / DSM 1251)).